We begin with the raw amino-acid sequence, 229 residues long: Germin-like protein 2-4 (229 aa).

An N-terminal signal peptide occupies residues Met-1–Gly-23. A disulfide bond links Cys-32 and Cys-52. A glycan (N-linked (GlcNAc...) asparagine) is linked at Asn-57. One can recognise a Cupin type-1 domain in the interval Ser-66–Arg-213. The Mn(2+) site is built by His-115, His-117, Glu-122, and His-161.

It belongs to the germin family. As to quaternary structure, oligomer (believed to be a pentamer but probably hexamer).

The protein localises to the secreted. Its subcellular location is the extracellular space. It is found in the apoplast. Functionally, may play a role in plant defense. Probably has no oxalate oxidase activity even if the active site is conserved. In Oryza sativa subsp. japonica (Rice), this protein is Germin-like protein 2-4.